The following is a 221-amino-acid chain: GTP cyclohydrolase III (221 aa).

Belongs to the archaeal-type GTP cyclohydrolase family.

The enzyme catalyses GTP + 3 H2O = 2-amino-5-formylamino-6-(5-phospho-D-ribosylamino)pyrimidin-4(3H)-one + 2 phosphate + 2 H(+). In terms of biological role, catalyzes the formation of 2-amino-5-formylamino-6-ribofuranosylamino-4(3H)-pyrimidinone ribonucleotide monophosphate and inorganic phosphate from GTP. Also has an independent pyrophosphate phosphohydrolase activity. This Pyrobaculum neutrophilum (strain DSM 2338 / JCM 9278 / NBRC 100436 / V24Sta) (Thermoproteus neutrophilus) protein is GTP cyclohydrolase III.